The chain runs to 273 residues: Eukaryotic translation initiation factor 3 subunit G-2 (273 aa).

The RRM domain maps to serine 193–proline 271.

The protein belongs to the eIF-3 subunit G family. As to quaternary structure, component of the eukaryotic translation initiation factor 3 (eIF-3) complex. The eIF-3 complex interacts with pix.

The protein resides in the cytoplasm. Its function is as follows. RNA-binding component of the eukaryotic translation initiation factor 3 (eIF-3) complex, which is involved in protein synthesis of a specialized repertoire of mRNAs and, together with other initiation factors, stimulates binding of mRNA and methionyl-tRNAi to the 40S ribosome. The eIF-3 complex specifically targets and initiates translation of a subset of mRNAs involved in cell proliferation. This subunit can bind 18S rRNA. The protein is Eukaryotic translation initiation factor 3 subunit G-2 of Drosophila simulans (Fruit fly).